Reading from the N-terminus, the 224-residue chain is UPF0502 protein Psyr_2419 (224 aa).

This sequence belongs to the UPF0502 family.

The chain is UPF0502 protein Psyr_2419 from Pseudomonas syringae pv. syringae (strain B728a).